The following is a 340-amino-acid chain: Phosphoribosylformylglycinamidine cyclo-ligase (340 aa).

The protein belongs to the AIR synthase family.

The protein localises to the cytoplasm. The catalysed reaction is 2-formamido-N(1)-(5-O-phospho-beta-D-ribosyl)acetamidine + ATP = 5-amino-1-(5-phospho-beta-D-ribosyl)imidazole + ADP + phosphate + H(+). It participates in purine metabolism; IMP biosynthesis via de novo pathway; 5-amino-1-(5-phospho-D-ribosyl)imidazole from N(2)-formyl-N(1)-(5-phospho-D-ribosyl)glycinamide: step 2/2. This chain is Phosphoribosylformylglycinamidine cyclo-ligase, found in Streptococcus pneumoniae (strain 70585).